Reading from the N-terminus, the 390-residue chain is 4-hydroxy-3-methylbut-2-en-1-yl diphosphate synthase (flavodoxin) (390 aa).

[4Fe-4S] cluster is bound by residues cysteine 281, cysteine 284, cysteine 316, and glutamate 323.

Belongs to the IspG family. [4Fe-4S] cluster is required as a cofactor.

It carries out the reaction (2E)-4-hydroxy-3-methylbut-2-enyl diphosphate + oxidized [flavodoxin] + H2O + 2 H(+) = 2-C-methyl-D-erythritol 2,4-cyclic diphosphate + reduced [flavodoxin]. It participates in isoprenoid biosynthesis; isopentenyl diphosphate biosynthesis via DXP pathway; isopentenyl diphosphate from 1-deoxy-D-xylulose 5-phosphate: step 5/6. In terms of biological role, converts 2C-methyl-D-erythritol 2,4-cyclodiphosphate (ME-2,4cPP) into 1-hydroxy-2-methyl-2-(E)-butenyl 4-diphosphate. This chain is 4-hydroxy-3-methylbut-2-en-1-yl diphosphate synthase (flavodoxin), found in Salinispora tropica (strain ATCC BAA-916 / DSM 44818 / JCM 13857 / NBRC 105044 / CNB-440).